We begin with the raw amino-acid sequence, 216 residues long: MKWSEVFHDITTRHDFQAMHDFLEKEYTTQIVYPDKKNIYQAFDLTPFEDIKVVILGQDPYHGPNQAHGLAFSVQPHAKFPPSLRNMYQELENDIGCHRTSPHLQDWAREGVLLLNTVLTVRQGEAHSHRNIGWETFTDEIIQAVSNYREHVVFILWGRPAQQKERFIDTSKHLIIKSPHPSPLSAFRGFFGSKPYSTTNNYLKSKGKTPVQWCES.

Residue D59 is the Proton acceptor of the active site.

Belongs to the uracil-DNA glycosylase (UDG) superfamily. UNG family.

Its subcellular location is the cytoplasm. The catalysed reaction is Hydrolyzes single-stranded DNA or mismatched double-stranded DNA and polynucleotides, releasing free uracil.. In terms of biological role, excises uracil residues from the DNA which can arise as a result of misincorporation of dUMP residues by DNA polymerase or due to deamination of cytosine. The protein is Uracil-DNA glycosylase of Staphylococcus epidermidis (strain ATCC 35984 / DSM 28319 / BCRC 17069 / CCUG 31568 / BM 3577 / RP62A).